A 433-amino-acid chain; its full sequence is 3-phosphoshikimate 1-carboxyvinyltransferase (433 aa).

3-phosphoshikimate-binding residues include lysine 21, serine 22, and arginine 26. Position 21 (lysine 21) interacts with phosphoenolpyruvate. The phosphoenolpyruvate site is built by glycine 96 and arginine 124. The 3-phosphoshikimate site is built by serine 167, serine 168, glutamine 169, serine 195, aspartate 310, and lysine 337. Residue glutamine 169 coordinates phosphoenolpyruvate. Aspartate 310 acts as the Proton acceptor in catalysis. Residues arginine 341, arginine 384, and lysine 410 each contribute to the phosphoenolpyruvate site.

The protein belongs to the EPSP synthase family. Monomer.

It is found in the cytoplasm. The catalysed reaction is 3-phosphoshikimate + phosphoenolpyruvate = 5-O-(1-carboxyvinyl)-3-phosphoshikimate + phosphate. It functions in the pathway metabolic intermediate biosynthesis; chorismate biosynthesis; chorismate from D-erythrose 4-phosphate and phosphoenolpyruvate: step 6/7. Catalyzes the transfer of the enolpyruvyl moiety of phosphoenolpyruvate (PEP) to the 5-hydroxyl of shikimate-3-phosphate (S3P) to produce enolpyruvyl shikimate-3-phosphate and inorganic phosphate. The chain is 3-phosphoshikimate 1-carboxyvinyltransferase from Clostridium botulinum (strain Alaska E43 / Type E3).